A 474-amino-acid chain; its full sequence is ATP synthase subunit beta (474 aa).

151–158 contacts ATP; it reads GGAGVGKT.

It belongs to the ATPase alpha/beta chains family. In terms of assembly, F-type ATPases have 2 components, CF(1) - the catalytic core - and CF(0) - the membrane proton channel. CF(1) has five subunits: alpha(3), beta(3), gamma(1), delta(1), epsilon(1). CF(0) has three main subunits: a(1), b(2) and c(9-12). The alpha and beta chains form an alternating ring which encloses part of the gamma chain. CF(1) is attached to CF(0) by a central stalk formed by the gamma and epsilon chains, while a peripheral stalk is formed by the delta and b chains.

The protein localises to the cell inner membrane. It carries out the reaction ATP + H2O + 4 H(+)(in) = ADP + phosphate + 5 H(+)(out). Its function is as follows. Produces ATP from ADP in the presence of a proton gradient across the membrane. The catalytic sites are hosted primarily by the beta subunits. In Paracoccus denitrificans (strain Pd 1222), this protein is ATP synthase subunit beta.